The sequence spans 162 residues: Large ribosomal subunit protein uL15 (162 aa).

The segment covering 1 to 18 has biased composition (basic and acidic residues); that stretch reads MKLNEIRDNEGATKDRMR. The tract at residues 1–42 is disordered; sequence MKLNEIRDNEGATKDRMRVGRGIGSGKGKTAGRGVKGQKART. The segment covering 21–35 has biased composition (gly residues); the sequence is RGIGSGKGKTAGRGV.

Belongs to the universal ribosomal protein uL15 family. In terms of assembly, part of the 50S ribosomal subunit.

In terms of biological role, binds to the 23S rRNA. This Methylobacterium sp. (strain 4-46) protein is Large ribosomal subunit protein uL15.